Consider the following 174-residue polypeptide: MKTFVLGGGCFWCLDAVYQKTKGVTSVISGYTGGHDRHPDYYSVCSGTTGHAEVVAVSFEEDVIPAEVILDMFFALHDPTTLNRQGYDVGTQYRSSMFYETTEEKILFEEAIERNQALWAHPIVTEVSRLPVFHVAEDFHQDYYAKHPEQGYCQVIINPKLAKARKYYSAWLNA.

The active site involves C10.

The protein belongs to the MsrA Met sulfoxide reductase family.

The enzyme catalyses L-methionyl-[protein] + [thioredoxin]-disulfide + H2O = L-methionyl-(S)-S-oxide-[protein] + [thioredoxin]-dithiol. It catalyses the reaction [thioredoxin]-disulfide + L-methionine + H2O = L-methionine (S)-S-oxide + [thioredoxin]-dithiol. Has an important function as a repair enzyme for proteins that have been inactivated by oxidation. Catalyzes the reversible oxidation-reduction of methionine sulfoxide in proteins to methionine. In Arthrobacter sp. (strain FB24), this protein is Peptide methionine sulfoxide reductase MsrA.